A 179-amino-acid chain; its full sequence is Lebocin-3 (179 aa).

Residues 1–16 (MYKFLVFSSVLVLFFA) form the signal peptide. Positions 17 to 120 (QASCQRFIQP…QPIESHRNTR (104 aa)) are excised as a propeptide. The O-linked (GalNAc...) threonine glycan is linked to Thr135. A propeptide spanning residues 153 to 179 (RRHASEDQEELRQYNEHFLIPRDIFQE) is cleaved from the precursor.

Belongs to the lebocin family. Post-translationally, O-glycosylation is important for the antibacterial activity of lebocin. Hemolymph. Produced in fat body.

The protein localises to the secreted. Functionally, antibacterial peptide. This Bombyx mori (Silk moth) protein is Lebocin-3 (LEB3).